The chain runs to 300 residues: Acetyl-coenzyme A carboxylase carboxyl transferase subunit beta (300 aa).

Residues 24–293 form the CoA carboxyltransferase N-terminal domain; it reads LWTNCESCSQ…NAPGAALGGA (270 aa). Positions 28, 31, 47, and 50 each coordinate Zn(2+). Residues 28–50 form a C4-type zinc finger; the sequence is CESCSQMILVKDLQKAMNVCPHC.

It belongs to the AccD/PCCB family. In terms of assembly, acetyl-CoA carboxylase is a heterohexamer composed of biotin carboxyl carrier protein (AccB), biotin carboxylase (AccC) and two subunits each of ACCase subunit alpha (AccA) and ACCase subunit beta (AccD). It depends on Zn(2+) as a cofactor.

It localises to the cytoplasm. The enzyme catalyses N(6)-carboxybiotinyl-L-lysyl-[protein] + acetyl-CoA = N(6)-biotinyl-L-lysyl-[protein] + malonyl-CoA. Its pathway is lipid metabolism; malonyl-CoA biosynthesis; malonyl-CoA from acetyl-CoA: step 1/1. Functionally, component of the acetyl coenzyme A carboxylase (ACC) complex. Biotin carboxylase (BC) catalyzes the carboxylation of biotin on its carrier protein (BCCP) and then the CO(2) group is transferred by the transcarboxylase to acetyl-CoA to form malonyl-CoA. In Gluconacetobacter diazotrophicus (strain ATCC 49037 / DSM 5601 / CCUG 37298 / CIP 103539 / LMG 7603 / PAl5), this protein is Acetyl-coenzyme A carboxylase carboxyl transferase subunit beta.